A 166-amino-acid polypeptide reads, in one-letter code: Phosphopantetheine adenylyltransferase (166 aa).

Ser-10 serves as a coordination point for substrate. ATP-binding positions include 10 to 11 (SF) and His-18. The substrate site is built by Lys-42, Ala-79, and Arg-93. ATP is bound by residues 94–96 (GLR), Glu-104, and 129–135 (VRPITAT).

The protein belongs to the bacterial CoaD family. In terms of assembly, homohexamer. Mg(2+) is required as a cofactor.

It is found in the cytoplasm. The enzyme catalyses (R)-4'-phosphopantetheine + ATP + H(+) = 3'-dephospho-CoA + diphosphate. Its pathway is cofactor biosynthesis; coenzyme A biosynthesis; CoA from (R)-pantothenate: step 4/5. Reversibly transfers an adenylyl group from ATP to 4'-phosphopantetheine, yielding dephospho-CoA (dPCoA) and pyrophosphate. In Methylobacterium sp. (strain 4-46), this protein is Phosphopantetheine adenylyltransferase.